The chain runs to 152 residues: Transcriptional regulator MraZ (152 aa).

SpoVT-AbrB domains lie at 5–52 and 81–124; these read ASAI…PIHE and AHEV…DEQS.

It belongs to the MraZ family. In terms of assembly, forms oligomers.

The protein localises to the cytoplasm. It localises to the nucleoid. The chain is Transcriptional regulator MraZ from Shewanella baltica (strain OS223).